Reading from the N-terminus, the 478-residue chain is Cobyric acid synthase (478 aa).

Residues 250-437 enclose the GATase cobBQ-type domain; that stretch reads QLRVVVPVLP…VHGVFDHPMH (188 aa). C331 serves as the catalytic Nucleophile. H429 is an active-site residue.

This sequence belongs to the CobB/CobQ family. CobQ subfamily.

Its pathway is cofactor biosynthesis; adenosylcobalamin biosynthesis. Functionally, catalyzes amidations at positions B, D, E, and G on adenosylcobyrinic A,C-diamide. NH(2) groups are provided by glutamine, and one molecule of ATP is hydrogenolyzed for each amidation. The protein is Cobyric acid synthase of Xanthomonas euvesicatoria pv. vesicatoria (strain 85-10) (Xanthomonas campestris pv. vesicatoria).